A 238-amino-acid polypeptide reads, in one-letter code: MRIDNRELNQLRSISFERHYTKHAEGSVLVSFGDTKVLCTASVESGVPRWLKGKGKGWITAEYGMLPRATNTRNQREAARGKQSGRTQEIQRLIGRSLRAMIDLSKLGENTIYLDCDVLQADGGTRTASVTGAAIALIDALESIQKTKKLKADPLIGLVAAVSVGMKDGEAYLDLNYEEDASCDTDLNVVMTQKGEFIELQGTAEEKPFTRAQADDMLVLAEKGIAELIAMQKTALGW.

Residues Arg86 and 124–126 each bind phosphate; that span reads GTR.

Belongs to the RNase PH family. As to quaternary structure, homohexameric ring arranged as a trimer of dimers.

The catalysed reaction is tRNA(n+1) + phosphate = tRNA(n) + a ribonucleoside 5'-diphosphate. Phosphorolytic 3'-5' exoribonuclease that plays an important role in tRNA 3'-end maturation. Removes nucleotide residues following the 3'-CCA terminus of tRNAs; can also add nucleotides to the ends of RNA molecules by using nucleoside diphosphates as substrates, but this may not be physiologically important. Probably plays a role in initiation of 16S rRNA degradation (leading to ribosome degradation) during starvation. This Psychrobacter arcticus (strain DSM 17307 / VKM B-2377 / 273-4) protein is Ribonuclease PH.